The following is a 389-amino-acid chain: uncharacterized protein (389 aa).

Residues Met-1 to Glu-12 show a composition bias toward polar residues. Disordered stretches follow at residues Met-1–Leu-49 and His-86–Ala-111. Residues Glu-40–Leu-49 are compositionally biased toward acidic residues. A compositionally biased stretch (basic residues) spans Arg-93–Arg-110.

This is an uncharacterized protein from Caenorhabditis elegans.